A 418-amino-acid chain; its full sequence is Light-independent protochlorophyllide reductase subunit N (418 aa).

Residues Cys-17, Cys-42, and Cys-103 each contribute to the [4Fe-4S] cluster site.

The protein belongs to the BchN/ChlN family. As to quaternary structure, protochlorophyllide reductase is composed of three subunits; ChlL, ChlN and ChlB. Forms a heterotetramer of two ChlB and two ChlN subunits. [4Fe-4S] cluster serves as cofactor.

The catalysed reaction is chlorophyllide a + oxidized 2[4Fe-4S]-[ferredoxin] + 2 ADP + 2 phosphate = protochlorophyllide a + reduced 2[4Fe-4S]-[ferredoxin] + 2 ATP + 2 H2O. The protein operates within porphyrin-containing compound metabolism; chlorophyll biosynthesis (light-independent). Its function is as follows. Component of the dark-operative protochlorophyllide reductase (DPOR) that uses Mg-ATP and reduced ferredoxin to reduce ring D of protochlorophyllide (Pchlide) to form chlorophyllide a (Chlide). This reaction is light-independent. The NB-protein (ChlN-ChlB) is the catalytic component of the complex. This Prochlorococcus marinus (strain NATL2A) protein is Light-independent protochlorophyllide reductase subunit N.